We begin with the raw amino-acid sequence, 382 residues long: MSSVTGFYIPPISFFGEGALEETADYIKNKDYKKALIVTDPGIAAIGLSGRVQKMLEERDLNVAIYDKTQPNPNIANVTAGLKVLKEQNSEIVVSIGGGSAHDNAKAIALLATNGGEIGDYEGVNQSKKAALPLFAINTTAGTASEMTRFTIISNEEKKIKMAIIDNNVTPAVAVNDPSTMFGLPPALTAATGLDALTHCIEAYVSTASNPITDACALKGIDLINESLVAAYKDGKDKKARTDMCYAEYLAGMAFNNASLGYVHALAHQLGGFYHLPHGVCNAVLLPHVQEANMQCPKAKKRLGEIALHFGASQEDPEETIKALHVLNRTMNIPRNLKELGVKTEDFEILAEHAMHDACHLTNPVQFTKEQVVAIIKKAYEY.

Aspartate 40, asparagine 72, glycine 99, serine 100, threonine 139, threonine 140, threonine 148, phenylalanine 150, lysine 161, and glycine 183 together coordinate NAD(+). Aspartate 195, histidine 199, and histidine 264 together coordinate Fe(2+). Residues histidine 268 and histidine 278 each contribute to the NAD(+) site. Residue histidine 278 coordinates Fe(2+).

This sequence belongs to the iron-containing alcohol dehydrogenase family. As to quaternary structure, homodimer. Zn(2+) is required as a cofactor. Requires Fe(2+) as cofactor.

Its subcellular location is the mitochondrion. It carries out the reaction a primary alcohol + NAD(+) = an aldehyde + NADH + H(+). The enzyme catalyses ethanol + NAD(+) = acetaldehyde + NADH + H(+). Inhibited by EDTA. Alcohol dehydrogenase specific for ethanol. Acts mainyl as a mitochondrial formaldehyde dehydrogenase and has no effect on ethanol production. Shows drastically reduced activity towards primary alcohols from 4 carbon atoms upward. Isomers of aliphatic alcohol, as well as secondary alcohols and glycerol are not used at all. The role of ADH4 in yeast metabolism is not yet known, but ADH4 is not responsible for the production of ethanol during growth on glucose nor responsible for the oxidation of ethanol to acetaldehyde. This chain is Alcohol dehydrogenase 4, found in Saccharomyces cerevisiae (strain ATCC 204508 / S288c) (Baker's yeast).